We begin with the raw amino-acid sequence, 367 residues long: RNA-binding protein 48 (367 aa).

In terms of domain architecture, RRM spans 46 to 124 (QYLLIQGVPA…GLLHVCYAPE (79 aa)). Disordered regions lie at residues 217–243 (PVDR…HNDS), 280–302 (QLQE…QTNP), and 343–367 (SVPK…RRRI). The span at 347–357 (PPEDKPEDVHT) shows a compositional bias: basic and acidic residues.

Belongs to the RBM48 family. In terms of assembly, component of the minor spliceosome. Within this complex, interacts with ARMC7 and PRPF8/PRP8.

In terms of biological role, as a component of the minor spliceosome, involved in the splicing of U12-type introns in pre-mRNAs. This chain is RNA-binding protein 48 (RBM48), found in Homo sapiens (Human).